Here is an 809-residue protein sequence, read N- to C-terminus: MDVPGPDSDWRSPAFRQKVVAQIEEAMRKAGTGHTKSSTEMESHVFTKAKTREEYLSMVARLIIHFRDIHKKAQGGPDPINALQNLPGGVPGVIGPRPPGAQMGGMGQMSMGPHAMQGVAGGQQGAGAAGPMQQMIQQQQQQQQQQQQQQSIQFQTFQPQQQQQATMQSQQPSAMFQQIRLQQLQQHHQNQQMQHQNQQQQQAQNQQQQNQLHQTRMQQQLQLQQLQQQQQQQLHQQQVHAQAQAQAQAQAQAQAQAQAQAQAQAQAQAQAQAQAQAQAQAQAQAQAQSIQQMQQQQQLQVQAQGQPQVQGQGGAVQMPPHSQQQQVLVPQMVQGQHSQMSALSQQQQLKLQQAMQARMQQQQQQQQQQQQQQQQQQQQQQQQQQQQQQQQQQHQQQQVQQVQQASQLTAVPGQMMPRPGMQIPPRLPRATPNSAIPQNPVAIGGQQMPQAQQMMSSPSPVQVQTPQSMPPPPQPQPSPQPPSSQPNSVSSGPTPSPGGFQPSPSPQPSQSPASSRTPQSYPLQVPSPGPLNTPGNPSSVMSPAGASQSEDQLYMDKLRQLSKYIEPLRRMINKIDKNEDRKKDLSKMKSLLNILTDPNTRCPLKTLQKCEIALEKLKNDMAVPTPPPPPVPCTKKQYLCQPILDAVLANIRSPVFNHSLYRTFAPAMTAIHGPQITGPSIPSRKRKLEDDERQAIPNILQGEVARLNSKFLVNLDPSFCSNNGMVHLICKLDDKNLPSVPPLQLSIPADYPDQSPHWEDDGQQYEANPFLRTVHKNMTSKLLQLPDKHSVTALLNTWAQSVRQACLSA.

Disordered stretches follow at residues Ala115–Gln137, Gln183–Gln211, and Gly413–Ser549. Over residues Val119–Ala128 the composition is skewed to gly residues. Residues Gln446–Gln467 are compositionally biased toward low complexity. Residues Ser468–Ser484 show a composition bias toward pro residues. 2 stretches are compositionally biased toward low complexity: residues Gln485 to Pro502 and Gln510 to Ser520. The span at Thr533 to Ser549 shows a compositional bias: polar residues.

Belongs to the Mediator complex subunit 15 family. Component of the Mediator complex. Interacts with srebf1 and srebf2. Interacts with smad2, smad3 and smad4.

The protein localises to the cytoplasm. The protein resides in the nucleus. In terms of biological role, component of the Mediator complex, a coactivator involved in the regulated transcription of nearly all RNA polymerase II-dependent genes. Mediator functions as a bridge to convey information from gene-specific regulatory proteins to the basal RNA polymerase II transcription machinery. Mediator is recruited to promoters by direct interactions with regulatory proteins and serves as a scaffold for the assembly of a functional preinitiation complex with RNA polymerase II and the general transcription factors. Required for cholesterol-dependent gene regulation. Positively regulates the Nodal signaling pathway. The polypeptide is Mediator of RNA polymerase II transcription subunit 15 (med15) (Danio rerio (Zebrafish)).